Here is a 541-residue protein sequence, read N- to C-terminus: Membrane protein insertase YidC (541 aa).

A run of 5 helical transmembrane segments spans residues 7–27 (LLFM…QVDY), 345–365 (LVQN…AILY), 415–435 (LGGC…YWTF), 453–473 (LSAQ…MFLL), and 492–512 (FMPL…VLYW).

Belongs to the OXA1/ALB3/YidC family. Type 1 subfamily. Interacts with the Sec translocase complex via SecD. Specifically interacts with transmembrane segments of nascent integral membrane proteins during membrane integration.

The protein localises to the cell inner membrane. Its function is as follows. Required for the insertion and/or proper folding and/or complex formation of integral membrane proteins into the membrane. Involved in integration of membrane proteins that insert both dependently and independently of the Sec translocase complex, as well as at least some lipoproteins. Aids folding of multispanning membrane proteins. The sequence is that of Membrane protein insertase YidC from Histophilus somni (strain 129Pt) (Haemophilus somnus).